The chain runs to 238 residues: tRNA (guanine-N(7)-)-methyltransferase (238 aa).

Over residues Met-1–Asp-12 the composition is skewed to polar residues. Residues Met-1–Ser-20 are disordered. S-adenosyl-L-methionine contacts are provided by Glu-70, Asp-95, Asp-122, and Asp-145. Residue Asp-145 is part of the active site. Substrate-binding positions include Lys-149, Asp-181, and Thr-216 to Glu-219.

The protein belongs to the class I-like SAM-binding methyltransferase superfamily. TrmB family.

The catalysed reaction is guanosine(46) in tRNA + S-adenosyl-L-methionine = N(7)-methylguanosine(46) in tRNA + S-adenosyl-L-homocysteine. Its pathway is tRNA modification; N(7)-methylguanine-tRNA biosynthesis. Its function is as follows. Catalyzes the formation of N(7)-methylguanine at position 46 (m7G46) in tRNA. The chain is tRNA (guanine-N(7)-)-methyltransferase from Neisseria meningitidis serogroup C (strain 053442).